Consider the following 424-residue polypeptide: tRNA modification GTPase MnmE (424 aa).

Residues Arg-20, Glu-77, and Arg-117 each contribute to the (6S)-5-formyl-5,6,7,8-tetrahydrofolate site. The region spanning 212-351 (GVRVVFAGPP…LVRDLRDAAR (140 aa)) is the TrmE-type G domain. Position 222 (Asn-222) interacts with K(+). GTP contacts are provided by residues 222 to 227 (NAGKST), 241 to 247 (SPIAGTT), and 266 to 269 (DTAG). Ser-226 is a Mg(2+) binding site. Residues Ser-241, Ile-243, and Thr-246 each coordinate K(+). A Mg(2+)-binding site is contributed by Thr-247. Residue Lys-424 participates in (6S)-5-formyl-5,6,7,8-tetrahydrofolate binding.

This sequence belongs to the TRAFAC class TrmE-Era-EngA-EngB-Septin-like GTPase superfamily. TrmE GTPase family. Homodimer. Heterotetramer of two MnmE and two MnmG subunits. The cofactor is K(+).

The protein localises to the cytoplasm. In terms of biological role, exhibits a very high intrinsic GTPase hydrolysis rate. Involved in the addition of a carboxymethylaminomethyl (cmnm) group at the wobble position (U34) of certain tRNAs, forming tRNA-cmnm(5)s(2)U34. This chain is tRNA modification GTPase MnmE, found in Erythrobacter litoralis (strain HTCC2594).